The chain runs to 375 residues: Queuine tRNA-ribosyltransferase (375 aa).

The Proton acceptor role is filled by Asp-89. Substrate is bound by residues 89–93 (DSGGF), Asp-143, Gln-187, and Gly-214. The interval 245–251 (GVGKPED) is RNA binding. Asp-264 serves as the catalytic Nucleophile. An RNA binding; important for wobble base 34 recognition region spans residues 269-273 (TRNAR). 4 residues coordinate Zn(2+): Cys-302, Cys-304, Cys-307, and His-333.

Belongs to the queuine tRNA-ribosyltransferase family. As to quaternary structure, homodimer. Within each dimer, one monomer is responsible for RNA recognition and catalysis, while the other monomer binds to the replacement base PreQ1. It depends on Zn(2+) as a cofactor.

It catalyses the reaction 7-aminomethyl-7-carbaguanine + guanosine(34) in tRNA = 7-aminomethyl-7-carbaguanosine(34) in tRNA + guanine. The protein operates within tRNA modification; tRNA-queuosine biosynthesis. Catalyzes the base-exchange of a guanine (G) residue with the queuine precursor 7-aminomethyl-7-deazaguanine (PreQ1) at position 34 (anticodon wobble position) in tRNAs with GU(N) anticodons (tRNA-Asp, -Asn, -His and -Tyr). Catalysis occurs through a double-displacement mechanism. The nucleophile active site attacks the C1' of nucleotide 34 to detach the guanine base from the RNA, forming a covalent enzyme-RNA intermediate. The proton acceptor active site deprotonates the incoming PreQ1, allowing a nucleophilic attack on the C1' of the ribose to form the product. After dissociation, two additional enzymatic reactions on the tRNA convert PreQ1 to queuine (Q), resulting in the hypermodified nucleoside queuosine (7-(((4,5-cis-dihydroxy-2-cyclopenten-1-yl)amino)methyl)-7-deazaguanosine). This Salmonella agona (strain SL483) protein is Queuine tRNA-ribosyltransferase.